The following is a 177-amino-acid chain: MKRIVLLRLGHRPERDKRITTHVGLTARMLGAEGMLLASDDQGIVHSLEDVVRRWGGDFYIKNNVNFKQEIRAWKEEGGKVCHLSMYGVNLPDVTGELKKCKKLMIVVGAEKVPPEIYQLANWNVAVGSQPHSEVAAVAITMDRIAEGEPLEKEFPGAELTIVPAERGKHVIENIRE.

S-adenosyl-L-methionine-binding positions include Leu-84 and 109 to 113; that span reads GAEKV.

It belongs to the aTrm56 family. In terms of assembly, homodimer.

The protein localises to the cytoplasm. The catalysed reaction is cytidine(56) in tRNA + S-adenosyl-L-methionine = 2'-O-methylcytidine(56) in tRNA + S-adenosyl-L-homocysteine + H(+). In terms of biological role, specifically catalyzes the AdoMet-dependent 2'-O-ribose methylation of cytidine at position 56 in tRNAs. This Methanosarcina acetivorans (strain ATCC 35395 / DSM 2834 / JCM 12185 / C2A) protein is tRNA (cytidine(56)-2'-O)-methyltransferase.